Reading from the N-terminus, the 405-residue chain is D-threonate kinase (405 aa).

Substrate-binding positions include Asp-12, Arg-59, and 88–91 (KVDS). ATP is bound by residues Ser-243, 337-340 (GGDG), and Gly-383.

The protein belongs to the four-carbon acid sugar kinase family.

The enzyme catalyses D-threonate + ATP = 4-O-phospho-D-threonate + ADP + H(+). In terms of biological role, catalyzes the ATP-dependent phosphorylation of D-threonate to D-threonate 4-phosphate. Can also phosphorylate 4-hydroxy-L-threonine, with lower efficiency. This Bordetella bronchiseptica (strain ATCC BAA-588 / NCTC 13252 / RB50) (Alcaligenes bronchisepticus) protein is D-threonate kinase.